Consider the following 434-residue polypeptide: Alpha-enolase (434 aa).

Mg(2+) is bound at residue serine 40. Residues histidine 158 and glutamate 167 each contribute to the substrate site. Glutamate 210 functions as the Proton donor in the catalytic mechanism. Mg(2+)-binding residues include aspartate 245, glutamate 293, and aspartate 318. Residues glutamate 293 and aspartate 318 each coordinate substrate. Lysine 343 (proton acceptor) is an active-site residue. Residues 370 to 373 (SHRS) and lysine 394 each bind substrate.

The protein belongs to the enolase family. Homodimer. Requires Mg(2+) as cofactor.

It localises to the cytoplasm. It carries out the reaction (2R)-2-phosphoglycerate = phosphoenolpyruvate + H2O. Its pathway is carbohydrate degradation; glycolysis; pyruvate from D-glyceraldehyde 3-phosphate: step 4/5. The chain is Alpha-enolase from Alligator mississippiensis (American alligator).